We begin with the raw amino-acid sequence, 495 residues long: Trigger factor (495 aa).

The 82-residue stretch at 162 to 243 (DDFVSIDLSA…VKSLKERELP (82 aa)) folds into the PPIase FKBP-type domain. The segment covering 425–437 (DTDGNEIDPKEYF) has biased composition (basic and acidic residues). The segment at 425 to 495 (DTDGNEIDPK…TDDDSENAEK (71 aa)) is disordered. The segment covering 450–461 (SADAEASENSEA) has biased composition (low complexity). The segment covering 486 to 495 (TDDDSENAEK) has biased composition (acidic residues).

The protein belongs to the FKBP-type PPIase family. Tig subfamily.

The protein resides in the cytoplasm. It catalyses the reaction [protein]-peptidylproline (omega=180) = [protein]-peptidylproline (omega=0). In terms of biological role, involved in protein export. Acts as a chaperone by maintaining the newly synthesized protein in an open conformation. Functions as a peptidyl-prolyl cis-trans isomerase. This chain is Trigger factor, found in Corynebacterium kroppenstedtii (strain DSM 44385 / JCM 11950 / CIP 105744 / CCUG 35717).